The sequence spans 479 residues: Kynurenine 3-monooxygenase (479 aa).

FAD-binding positions include valine 19, 37–40 (YEAR), and alanine 57. Residues arginine 85 and tyrosine 99 each contribute to the L-kynurenine site. Residues arginine 111, leucine 136, threonine 172, aspartate 304, and 317 to 318 (MN) contribute to the FAD site. L-kynurenine is bound by residues asparagine 363 and tyrosine 398. Helical transmembrane passes span 385-404 (FLHAIMPSTFIPLYTMVAFT) and 425-445 (GLFVLGSLIAIGGTYLLVHHL).

It belongs to the aromatic-ring hydroxylase family. KMO subfamily. FAD serves as cofactor. In terms of tissue distribution, expressed by organs containing secondary lymphoid tissue, such as the lung, spleen, mesenteric lymph node, thymus and peripheral lymph nodes.

The protein resides in the mitochondrion outer membrane. The enzyme catalyses L-kynurenine + NADPH + O2 + H(+) = 3-hydroxy-L-kynurenine + NADP(+) + H2O. It participates in cofactor biosynthesis; NAD(+) biosynthesis; quinolinate from L-kynurenine: step 1/3. Catalyzes the hydroxylation of L-kynurenine (L-Kyn) to form 3-hydroxy-L-kynurenine (L-3OHKyn). Required for synthesis of quinolinic acid, a neurotoxic NMDA receptor antagonist and potential endogenous inhibitor of NMDA receptor signaling in axonal targeting, synaptogenesis and apoptosis during brain development. Quinolinic acid may also affect NMDA receptor signaling in pancreatic beta cells, osteoblasts, myocardial cells, and the gastrointestinal tract. This chain is Kynurenine 3-monooxygenase, found in Mus musculus (Mouse).